Reading from the N-terminus, the 148-residue chain is Ubiquitin-conjugating enzyme E2 10 (148 aa).

A UBC core domain is found at 1–147 (MASKRILKEL…ARSWTQKYAM (147 aa)). The active-site Glycyl thioester intermediate is the Cys-85.

The protein belongs to the ubiquitin-conjugating enzyme family. Interacts with CHIP and the E3 ubiquitin ligase BB. Associates with the E3 ubiquitin ligase JMJ24. Ubiquitously expressed with the highest levels in rosette leaves, roots and petals.

It carries out the reaction S-ubiquitinyl-[E1 ubiquitin-activating enzyme]-L-cysteine + [E2 ubiquitin-conjugating enzyme]-L-cysteine = [E1 ubiquitin-activating enzyme]-L-cysteine + S-ubiquitinyl-[E2 ubiquitin-conjugating enzyme]-L-cysteine.. The protein operates within protein modification; protein ubiquitination. In terms of biological role, accepts the ubiquitin from the E1 complex and catalyzes its covalent attachment to other proteins. Mediates the selective degradation of short-lived and abnormal proteins. The protein is Ubiquitin-conjugating enzyme E2 10 of Arabidopsis thaliana (Mouse-ear cress).